The chain runs to 209 residues: Type III pantothenate kinase (209 aa).

Position 5 to 12 (Asp5 to Asn12) interacts with ATP. Substrate is bound by residues Tyr68 and Gly72–Arg75. Asp74 acts as the Proton acceptor in catalysis. Asp89 contributes to the K(+) binding site. Ser92 contacts ATP. Thr144 is a substrate binding site.

This sequence belongs to the type III pantothenate kinase family. Homodimer. It depends on NH4(+) as a cofactor. Requires K(+) as cofactor.

The protein localises to the cytoplasm. The catalysed reaction is (R)-pantothenate + ATP = (R)-4'-phosphopantothenate + ADP + H(+). The protein operates within cofactor biosynthesis; coenzyme A biosynthesis; CoA from (R)-pantothenate: step 1/5. In terms of biological role, catalyzes the phosphorylation of pantothenate (Pan), the first step in CoA biosynthesis. The chain is Type III pantothenate kinase from Campylobacter jejuni subsp. jejuni serotype O:2 (strain ATCC 700819 / NCTC 11168).